A 491-amino-acid chain; its full sequence is Maintenance of mitochondrial morphology protein 1 (491 aa).

Residues methionine 1–glycine 22 are Lumenal-facing. The chain crosses the membrane as a helical span at residues phenylalanine 23–phenylalanine 43. The Cytoplasmic segment spans residues glycine 44–asparagine 491. Disordered regions lie at residues proline 50 to serine 95, proline 275 to serine 325, and arginine 392 to asparagine 491. Positions leucine 54–serine 64 are enriched in basic residues. Polar residues-rich tracts occupy residues asparagine 65 to arginine 78 and serine 85 to serine 95. Positions glutamine 131–proline 384 constitute an SMP-LTD domain. A compositionally biased stretch (pro residues) spans proline 275–proline 287. Composition is skewed to polar residues over residues threonine 300 to glutamate 315 and threonine 403 to alanine 412. The segment covering arginine 422 to arginine 434 has biased composition (basic and acidic residues).

This sequence belongs to the MMM1 family. In terms of assembly, homodimer. Component of the ER-mitochondria encounter structure (ERMES) or MDM complex, composed of mmm1, mdm10, mdm12 and mdm34. A mmm1 homodimer associates with one molecule of mdm12 on each side in a pairwise head-to-tail manner, and the SMP-LTD domains of mmm1 and mdm12 generate a continuous hydrophobic tunnel for phospholipid trafficking.

It localises to the endoplasmic reticulum membrane. Its function is as follows. Component of the ERMES/MDM complex, which serves as a molecular tether to connect the endoplasmic reticulum (ER) and mitochondria. Components of this complex are involved in the control of mitochondrial shape and protein biogenesis, and function in nonvesicular lipid trafficking between the ER and mitochondria. The mdm12-mmm1 subcomplex functions in the major beta-barrel assembly pathway that is responsible for biogenesis of all outer membrane beta-barrel proteins, and acts in a late step after the SAM complex. The mdm10-mdm12-mmm1 subcomplex further acts in the TOM40-specific pathway after the action of the mdm12-mmm1 complex. Essential for establishing and maintaining the structure of mitochondria and maintenance of mtDNA nucleoids. This is Maintenance of mitochondrial morphology protein 1 from Aspergillus flavus (strain ATCC 200026 / FGSC A1120 / IAM 13836 / NRRL 3357 / JCM 12722 / SRRC 167).